The sequence spans 76 residues: uncharacterized protein (76 aa).

The helical transmembrane segment at 18–38 (FISALFFFNAVCIVSDNLLII) threads the bilayer.

The protein localises to the cell membrane. This is an uncharacterized protein from Escherichia coli O6:H1 (strain CFT073 / ATCC 700928 / UPEC).